A 319-amino-acid polypeptide reads, in one-letter code: Acetyl-coenzyme A carboxylase carboxyl transferase subunit alpha (319 aa).

The region spanning 35–296 (NIDEEVHRLR…KAQLLADLAD (262 aa)) is the CoA carboxyltransferase C-terminal domain.

This sequence belongs to the AccA family. As to quaternary structure, acetyl-CoA carboxylase is a heterohexamer composed of biotin carboxyl carrier protein (AccB), biotin carboxylase (AccC) and two subunits each of ACCase subunit alpha (AccA) and ACCase subunit beta (AccD).

The protein resides in the cytoplasm. It catalyses the reaction N(6)-carboxybiotinyl-L-lysyl-[protein] + acetyl-CoA = N(6)-biotinyl-L-lysyl-[protein] + malonyl-CoA. Its pathway is lipid metabolism; malonyl-CoA biosynthesis; malonyl-CoA from acetyl-CoA: step 1/1. In terms of biological role, component of the acetyl coenzyme A carboxylase (ACC) complex. First, biotin carboxylase catalyzes the carboxylation of biotin on its carrier protein (BCCP) and then the CO(2) group is transferred by the carboxyltransferase to acetyl-CoA to form malonyl-CoA. This chain is Acetyl-coenzyme A carboxylase carboxyl transferase subunit alpha, found in Shigella boydii serotype 4 (strain Sb227).